The following is a 328-amino-acid chain: Glycerol-3-phosphate dehydrogenase [NAD(P)+] (328 aa).

The NADPH site is built by W15, R35, and K108. Positions 108, 136, and 138 each coordinate sn-glycerol 3-phosphate. Residue A140 participates in NADPH binding. Residues K191, D244, S254, R255, and N256 each coordinate sn-glycerol 3-phosphate. K191 serves as the catalytic Proton acceptor. Position 255 (R255) interacts with NADPH. NADPH is bound by residues L275 and E277.

The protein belongs to the NAD-dependent glycerol-3-phosphate dehydrogenase family.

The protein localises to the cytoplasm. The enzyme catalyses sn-glycerol 3-phosphate + NAD(+) = dihydroxyacetone phosphate + NADH + H(+). The catalysed reaction is sn-glycerol 3-phosphate + NADP(+) = dihydroxyacetone phosphate + NADPH + H(+). It functions in the pathway membrane lipid metabolism; glycerophospholipid metabolism. Its function is as follows. Catalyzes the reduction of the glycolytic intermediate dihydroxyacetone phosphate (DHAP) to sn-glycerol 3-phosphate (G3P), the key precursor for phospholipid synthesis. The polypeptide is Glycerol-3-phosphate dehydrogenase [NAD(P)+] (Azorhizobium caulinodans (strain ATCC 43989 / DSM 5975 / JCM 20966 / LMG 6465 / NBRC 14845 / NCIMB 13405 / ORS 571)).